A 264-amino-acid chain; its full sequence is Transmembrane protein 41A (264 aa).

A signal peptide spans 1–17 (MRPLLGLLLVFAGCTFA). Helical transmembrane passes span 67-87 (AYVF…AIPG), 100-122 (GPWL…CYLL), 153-173 (LFFF…FLNL), 175-195 (APIL…GLIP), and 219-239 (WDTV…GTLI). A VTT domain region spans residues 96–207 (GALFGPWLGL…FICVQTGSIL (112 aa)). Asparagine 250 is a glycosylation site (N-linked (GlcNAc...) asparagine).

The protein belongs to the TMEM41 family.

It localises to the membrane. The sequence is that of Transmembrane protein 41A (TMEM41A) from Homo sapiens (Human).